Here is a 154-residue protein sequence, read N- to C-terminus: Putative pre-16S rRNA nuclease (154 aa).

Belongs to the YqgF nuclease family.

The protein localises to the cytoplasm. Functionally, could be a nuclease involved in processing of the 5'-end of pre-16S rRNA. In Rickettsia canadensis (strain McKiel), this protein is Putative pre-16S rRNA nuclease.